The sequence spans 62 residues: Alpha-lytic protease L1 (62 aa).

Serine 48 acts as the Charge relay system in catalysis.

It belongs to the peptidase S1 family. Monomer.

It is found in the secreted. It catalyses the reaction Preferential cleavage: Ala-|-Xaa, Val-|-Xaa in bacterial cell walls, elastin and other proteins.. Inhibited by phenylmethanesulfonyl fluoride (PMSF) and p-chloromercuribenzoate (PCMB). Has bacteriolytic activity. The protein is Alpha-lytic protease L1 of Lysobacter sp. (strain XL1).